A 721-amino-acid polypeptide reads, in one-letter code: Polyribonucleotide nucleotidyltransferase (721 aa).

Residues Asp-485 and Asp-491 each coordinate Mg(2+). One can recognise a KH domain in the interval 552–611 (PKIYIVKIHPDKIREIIGPGGKVIRELQAMSNTRIEVDDSGTVKIAASTEEEARIAIKAV). The region spanning 621–689 (GEIYEGEVVR…PEGKIRLSRK (69 aa)) is the S1 motif domain. The tract at residues 687–721 (SRKALLPAPEKGEEDEKSAPRSRRPGGNSDRRNNR) is disordered.

Belongs to the polyribonucleotide nucleotidyltransferase family. It depends on Mg(2+) as a cofactor.

The protein resides in the cytoplasm. It carries out the reaction RNA(n+1) + phosphate = RNA(n) + a ribonucleoside 5'-diphosphate. Involved in mRNA degradation. Catalyzes the phosphorolysis of single-stranded polyribonucleotides processively in the 3'- to 5'-direction. In Desulfosudis oleivorans (strain DSM 6200 / JCM 39069 / Hxd3) (Desulfococcus oleovorans), this protein is Polyribonucleotide nucleotidyltransferase.